Here is a 225-residue protein sequence, read N- to C-terminus: Protein E26 (225 aa).

In terms of assembly, interacts with proteins IE0 and IE1. Interacts with protein FP25K. Interacts with host importin alpha-16. Post-translationally, palmitoylated.

The protein resides in the host nucleus inner membrane. It is found in the virion. It localises to the host cytoplasm. Its subcellular location is the host nucleus. Plays a role in the sorting of ODV envelope proteins to the host inner nuclear membrane. May facilitate the fusion and release of nucleocapsids into the cytoplasm. Modulates the expression levels of IE0 and IE1. The sequence is that of Protein E26 (DA26) from Lepidoptera (butterflies and moths).